Consider the following 417-residue polypeptide: Serine hydroxymethyltransferase (417 aa).

(6S)-5,6,7,8-tetrahydrofolate contacts are provided by residues L121 and 125-127 (GHL). An N6-(pyridoxal phosphate)lysine modification is found at K229. Residue 355–357 (SPF) coordinates (6S)-5,6,7,8-tetrahydrofolate.

The protein belongs to the SHMT family. Homodimer. It depends on pyridoxal 5'-phosphate as a cofactor.

It is found in the cytoplasm. The enzyme catalyses (6R)-5,10-methylene-5,6,7,8-tetrahydrofolate + glycine + H2O = (6S)-5,6,7,8-tetrahydrofolate + L-serine. It participates in one-carbon metabolism; tetrahydrofolate interconversion. It functions in the pathway amino-acid biosynthesis; glycine biosynthesis; glycine from L-serine: step 1/1. In terms of biological role, catalyzes the reversible interconversion of serine and glycine with tetrahydrofolate (THF) serving as the one-carbon carrier. This reaction serves as the major source of one-carbon groups required for the biosynthesis of purines, thymidylate, methionine, and other important biomolecules. Also exhibits THF-independent aldolase activity toward beta-hydroxyamino acids, producing glycine and aldehydes, via a retro-aldol mechanism. The chain is Serine hydroxymethyltransferase from Shewanella baltica (strain OS195).